Reading from the N-terminus, the 648-residue chain is Putative potassium transport protein DDB_G0292412 (648 aa).

A helical transmembrane segment spans residues L48–V68. The N-linked (GlcNAc...) asparagine glycan is linked to N81. 2 disordered regions span residues H106–D145 and Q223–S261. Residues D110–E129 are compositionally biased toward acidic residues. Residues I199 to Q227 are a coiled coil. N-linked (GlcNAc...) asparagine glycans are attached at residues N239, N243, N247, N248, N254, and N257. The next 6 membrane-spanning stretches (helical) occupy residues L313–G333, G353–F373, F385–L405, V443–L463, N472–T491, and S505–L525. N-linked (GlcNAc...) asparagine glycosylation occurs at N536. 3 consecutive transmembrane segments (helical) span residues I550–S570, G571–L591, and S592–G612.

Belongs to the TrkH potassium transport family.

Its subcellular location is the membrane. Its function is as follows. May function as a potassium transporter. The sequence is that of Putative potassium transport protein DDB_G0292412 from Dictyostelium discoideum (Social amoeba).